A 519-amino-acid polypeptide reads, in one-letter code: Cytochrome P450 monooxygenase easM (519 aa).

Residues 16–33 (VAPALFASSISVLFLILS) traverse the membrane as a helical segment. Asparagine 50 and asparagine 353 each carry an N-linked (GlcNAc...) asparagine glycan. Cysteine 458 lines the heme pocket.

The protein belongs to the cytochrome P450 family. It depends on heme as a cofactor.

The protein resides in the membrane. The protein operates within alkaloid biosynthesis; ergot alkaloid biosynthesis. Functionally, cytochrome P450 monooxygenase; part of the gene cluster that mediates the biosynthesis of fumiclavanine C, a fungal ergot alkaloid. DmaW catalyzes the first step of ergot alkaloid biosynthesis by condensing dimethylallyl diphosphate (DMAP) and tryptophan to form 4-dimethylallyl-L-tryptophan. The second step is catalyzed by the methyltransferase easF that methylates 4-dimethylallyl-L-tryptophan in the presence of S-adenosyl-L-methionine, resulting in the formation of 4-dimethylallyl-L-abrine. The catalase easC and the FAD-dependent oxidoreductase easE then transform 4-dimethylallyl-L-abrine to chanoclavine-I which is further oxidized by EasD in the presence of NAD(+), resulting in the formation of chanoclavine-I aldehyde. EasA reduces chanoclavine-I aldehyde to dihydrochanoclavine-I aldehyde that spontaneously dehydrates to form 6,8-dimethyl-6,7-didehydroergoline. EasG then catalyzes the reduction of 6,8-dimethyl-6,7-didehydroergoline to form festuclavine. Hydrolysis of festuclavine by easM then leads to the formation of fumigaclavine B which is in turn acetylated by easN to fumigaclavine A. Finally, easL catalyzes the conversion of fumigaclavine A into fumigaclavine C by attaching a dimethylallyl moiety to C-2 of the indole nucleus. In Aspergillus fumigatus (strain ATCC MYA-4609 / CBS 101355 / FGSC A1100 / Af293) (Neosartorya fumigata), this protein is Cytochrome P450 monooxygenase easM.